The primary structure comprises 483 residues: METGKVTQEPKQMKFTYRFAFFFIAGSLATFVFHALTSSSSVSLFGWRLQLRQLHHLPTAHYLQTRDEFAVYSVDELNAFKEFYDKSVSDSVGASYTEAEQTNIKEALGAMRLALDMHISGKDDKAARLFEHALALAPKHPEVLLRYGEFLEHNQRNIVLADQYYFQALSISPSNSEAFANRQRTANVVQTLDERRLVSLDEKRDALSAIHEANAALRRAKKEAYFQHIYHSVGIEGNTMTLAQTRSVLETRMAVDGKSIDEHNEILGMDLAMKYINASLVQKLEITLKDILELHRRVLGHVDPIEGGEFRRTQVYVGGHVPPGPGDLALLMQRFEHWLNSEQSNSLHPVNYAALAHYKLVHIHPFIDGNGRTSRLLMNTLLMRAGYPPVIIPKQQRSQYYHFLKLANEGDIRPFVRFIADCTEKTLDLYLWATSDLPQQIPMLIQTESEGGVLAQLQSHIAQSAPEPYESGSGLDSGVNGMP.

Residues 20–42 traverse the membrane as a helical segment; sequence AFFFIAGSLATFVFHALTSSSSV. 2 TPR repeats span residues 107-140 and 141-175; these read ALGAMRLALDMHISGKDDKAARLFEHALALAPKH and PEVLLRYGEFLEHNQRNIVLADQYYFQALSISPSN. An Inhibitory (S/T)XXXE(G/N) motif motif is present at residues 232–237; the sequence is SVGIEG. ATP contacts are provided by residues Glu-236 and 317 to 320; that span reads VGGH. The region spanning 286–421 is the Fido domain; sequence ITLKDILELH…IRPFVRFIAD (136 aa). Residue His-364 is part of the active site. ATP is bound by residues 368-375, 400-401, and Asn-408; these read DGNGRTSR and YY. A disordered region spans residues 464 to 483; sequence SAPEPYESGSGLDSGVNGMP.

It belongs to the fic family. In terms of assembly, homodimer.

The protein localises to the membrane. It carries out the reaction L-tyrosyl-[protein] + ATP = O-(5'-adenylyl)-L-tyrosyl-[protein] + diphosphate. The enzyme catalyses L-threonyl-[protein] + ATP = 3-O-(5'-adenylyl)-L-threonyl-[protein] + diphosphate. The catalysed reaction is 3-O-(5'-adenylyl)-L-threonyl-[protein] + H2O = L-threonyl-[protein] + AMP + H(+). With respect to regulation, the side chain of Glu-236 determines which of the two opposing activities (AMPylase or de-AMPylase) will take place. In response to endoplasmic reticulum stress, mediates de-AMPylase activity. Adenylyltransferase activity is inhibited by the inhibitory helix present at the N-terminus: Glu-236 binds ATP and competes with ATP-binding at Arg-375, thereby preventing adenylyltransferase activity. In unstressed cells, disengagement of Glu-236 promotes adenylyltransferase activity. Activation dissociates ATP-binding from Glu-236, allowing ordered binding of the entire ATP moiety with the alpha-phosphate in an orientation that is productive for accepting an incoming target hydroxyl side chain. Protein that can both mediate the addition of adenosine 5'-monophosphate (AMP) to specific residues of target proteins (AMPylation), and the removal of the same modification from target proteins (de-AMPylation), depending on the context. The side chain of Glu-236 determines which of the two opposing activities (AMPylase or de-AMPylase) will take place. Acts as a key regulator of the unfolded protein response (UPR) by mediating AMPylation or de-AMPylation of Hsc70-3/BiP. In unstressed cells, acts as an adenylyltransferase by mediating AMPylation of Hsc70-3/BiP at 'Thr-518', thereby inactivating it. In response to endoplasmic reticulum stress, acts as a phosphodiesterase by mediating removal of ATP (de-AMPylation) from Hsc70-3/BiP at 'Thr-518', leading to restore HSPA5/BiP activity. This chain is Protein adenylyltransferase Fic, found in Drosophila grimshawi (Hawaiian fruit fly).